A 284-amino-acid chain; its full sequence is Nucleotide-binding protein Pput_0988 (284 aa).

8–15 (GRSGSGKS) contacts ATP. 60-63 (DARN) contacts GTP.

This sequence belongs to the RapZ-like family.

Functionally, displays ATPase and GTPase activities. The chain is Nucleotide-binding protein Pput_0988 from Pseudomonas putida (strain ATCC 700007 / DSM 6899 / JCM 31910 / BCRC 17059 / LMG 24140 / F1).